The chain runs to 326 residues: Cathepsin L-like proteinase (326 aa).

A signal peptide spans 1–15 (MRLFILAVLTVGVLG). Residues 16 to 106 (SNDDLWHQWK…HGVPYEANNR (91 aa)) constitute a propeptide, activation peptide. Position 109 is a 3-hydroxyproline; partial (Pro-109). 3 disulfide bridges follow: Cys-129–Cys-172, Cys-163–Cys-204, and Cys-262–Cys-311. Cys-132 is an active-site residue. At Pro-196 the chain carries 3-hydroxyproline; partial. Active-site residues include His-269 and Asn-289.

This sequence belongs to the peptidase C1 family. In terms of assembly, monomer. Contains cysteine residues involved in intramolecular disulfide bonding.

The protein resides in the secreted. With respect to regulation, strongly inhibited by Antipain, E64 and Leupeptin, and weakly inhibited by iodoacetic acid (IAA) and phenylmethylsulfonyl fluoride (PMSF). Requires the presence of dithiothreitol (DTT) for activity. In terms of biological role, thiol protease. Probably involved in interaction with host tissues. Displays a similar activity to that of papain. Has high activity on Z-Phe-Arg-NHMec, but no activity on Z-Arg-NHMec. This is Cathepsin L-like proteinase from Fasciola hepatica (Liver fluke).